We begin with the raw amino-acid sequence, 919 residues long: UPF0182 protein SUN_1015 (919 aa).

The next 7 helical transmembrane spans lie at 8–28 (IIIT…VDYY), 51–71 (ILSF…HIHF), 102–122 (AVAW…GSYA), 158–178 (VYQF…IGVL), 207–227 (LTAF…YNIL), 246–266 (IPAY…LFFY), and 274–294 (VIVS…WIYP).

Belongs to the UPF0182 family.

The protein resides in the cell membrane. This is UPF0182 protein SUN_1015 from Sulfurovum sp. (strain NBC37-1).